The sequence spans 342 residues: MTVRVAVAGASGYAGGELLRLLLSHPEVEIGALTAGGNAGSELGAHHPNLLPLADRVLADTTTAQLSGHDVVFLALPHGHSAAIAAELGDDTVVIDCGADHRLNDPTDWARWYGGEHPGTWPYGIPELPGLRERLTGARRVAVPGCFPTVSSLTIAPALAAGLVDPEVVVVAVTGTSGAGRALKPHLLSAEVMGSASVYGVGGAHRHTPELIQNLSAAGGEPVRVSFTPVLAPMARGILATCSAALRADTDAEAVRKVYLDAYGDEPFVHVLPEGTWPQTSATLGANTVHLQVTVDDDAGRLVAVGAVDNLTKGTAGAAVQCMNLALGLPETTGLPLVGVAP.

Cys146 is a catalytic residue.

This sequence belongs to the NAGSA dehydrogenase family. Type 1 subfamily.

Its subcellular location is the cytoplasm. The catalysed reaction is N-acetyl-L-glutamate 5-semialdehyde + phosphate + NADP(+) = N-acetyl-L-glutamyl 5-phosphate + NADPH + H(+). It participates in amino-acid biosynthesis; L-arginine biosynthesis; N(2)-acetyl-L-ornithine from L-glutamate: step 3/4. Functionally, catalyzes the NADPH-dependent reduction of N-acetyl-5-glutamyl phosphate to yield N-acetyl-L-glutamate 5-semialdehyde. The sequence is that of N-acetyl-gamma-glutamyl-phosphate reductase from Saccharopolyspora erythraea (strain ATCC 11635 / DSM 40517 / JCM 4748 / NBRC 13426 / NCIMB 8594 / NRRL 2338).